The sequence spans 322 residues: Stage V sporulation protein K (322 aa).

99 to 106 provides a ligand contact to ATP; sequence GNPGTGKT.

This sequence belongs to the CbxX/CfxQ family.

This Bacillus subtilis (strain 168) protein is Stage V sporulation protein K (spoVK).